We begin with the raw amino-acid sequence, 734 residues long: Photosystem I P700 chlorophyll a apoprotein A2 (734 aa).

Helical transmembrane passes span 46–69 (IFASHFGQLAIIFLWTSGNLFHVA), 135–158 (LYTGALFLLFLSAISLIAGWLHLQ), 175–199 (LNHHLSGLFGVSSLAWTGHLVHVAI), 273–291 (MAHHHLAIAFIFLVAGHMY), 330–353 (IHFQLGLALASLGVITSLVAQHMY), 369–395 (AALYTHHQYIAGFIMTGAFAHGAIFFI), 417–439 (AIKSHLSWASLFLGFHTLGLYVH), and 517–535 (FLVHHAIALGLHTTTLILV). The [4Fe-4S] cluster site is built by C559 and C568. Helical transmembrane passes span 575–596 (AFYLAVFWMLNTIGWVTFYWHW) and 643–665 (LSVWAWMFLFGHLVWATGFMFLI). Residues H654, M662, and Y670 each contribute to the chlorophyll a site. W671 contributes to the phylloquinone binding site. Residues 707–727 (LVGLAHFSVGYIFTYAAFLIA) traverse the membrane as a helical segment.

Belongs to the PsaA/PsaB family. The PsaA/B heterodimer binds the P700 chlorophyll special pair and subsequent electron acceptors. PSI consists of a core antenna complex that captures photons, and an electron transfer chain that converts photonic excitation into a charge separation. The eukaryotic PSI reaction center is composed of at least 11 subunits. It depends on P700 is a chlorophyll a/chlorophyll a' dimer, A0 is one or more chlorophyll a, A1 is one or both phylloquinones and FX is a shared 4Fe-4S iron-sulfur center. as a cofactor.

It localises to the plastid. The protein resides in the chloroplast thylakoid membrane. It carries out the reaction reduced [plastocyanin] + hnu + oxidized [2Fe-2S]-[ferredoxin] = oxidized [plastocyanin] + reduced [2Fe-2S]-[ferredoxin]. Its function is as follows. PsaA and PsaB bind P700, the primary electron donor of photosystem I (PSI), as well as the electron acceptors A0, A1 and FX. PSI is a plastocyanin-ferredoxin oxidoreductase, converting photonic excitation into a charge separation, which transfers an electron from the donor P700 chlorophyll pair to the spectroscopically characterized acceptors A0, A1, FX, FA and FB in turn. Oxidized P700 is reduced on the lumenal side of the thylakoid membrane by plastocyanin. This Chloranthus spicatus (Chulantree) protein is Photosystem I P700 chlorophyll a apoprotein A2.